The sequence spans 473 residues: Photosystem II CP43 reaction center protein (473 aa).

Residues 1-14 (MKTLYSLRRFYHVE) constitute a propeptide that is removed on maturation. Residue Thr-15 is modified to N-acetylthreonine. At Thr-15 the chain carries Phosphothreonine. 5 helical membrane passes run 69–93 (LFEV…PHLA), 134–155 (LLGP…KDRN), 178–200 (KALY…RKIT), 255–275 (KPFA…LSYS), and 291–312 (WFNN…ASQA). Residue Glu-367 coordinates [CaMn4O5] cluster. Residues 447–471 (RARAAAAGFEKGIDRDFEPVLSMTP) traverse the membrane as a helical segment.

This sequence belongs to the PsbB/PsbC family. PsbC subfamily. As to quaternary structure, PSII is composed of 1 copy each of membrane proteins PsbA, PsbB, PsbC, PsbD, PsbE, PsbF, PsbH, PsbI, PsbJ, PsbK, PsbL, PsbM, PsbT, PsbX, PsbY, PsbZ, Psb30/Ycf12, at least 3 peripheral proteins of the oxygen-evolving complex and a large number of cofactors. It forms dimeric complexes. The cofactor is Binds multiple chlorophylls and provides some of the ligands for the Ca-4Mn-5O cluster of the oxygen-evolving complex. It may also provide a ligand for a Cl- that is required for oxygen evolution. PSII binds additional chlorophylls, carotenoids and specific lipids..

Its subcellular location is the plastid. The protein localises to the chloroplast thylakoid membrane. Its function is as follows. One of the components of the core complex of photosystem II (PSII). It binds chlorophyll and helps catalyze the primary light-induced photochemical processes of PSII. PSII is a light-driven water:plastoquinone oxidoreductase, using light energy to abstract electrons from H(2)O, generating O(2) and a proton gradient subsequently used for ATP formation. This Manihot esculenta (Cassava) protein is Photosystem II CP43 reaction center protein.